Here is an 89-residue protein sequence, read N- to C-terminus: Small ribosomal subunit protein uS15 (89 aa).

The protein belongs to the universal ribosomal protein uS15 family. In terms of assembly, part of the 30S ribosomal subunit. Forms a bridge to the 50S subunit in the 70S ribosome, contacting the 23S rRNA.

One of the primary rRNA binding proteins, it binds directly to 16S rRNA where it helps nucleate assembly of the platform of the 30S subunit by binding and bridging several RNA helices of the 16S rRNA. Its function is as follows. Forms an intersubunit bridge (bridge B4) with the 23S rRNA of the 50S subunit in the ribosome. The chain is Small ribosomal subunit protein uS15 from Chlamydia felis (strain Fe/C-56) (Chlamydophila felis).